The chain runs to 449 residues: Chromosomal replication initiator protein DnaA (449 aa).

The domain I, interacts with DnaA modulators stretch occupies residues 1–72 (MENIHDLWER…SETIDDLTGV (72 aa)). The segment at 72-111 (VRLYPKFVIPTSQLDEPFVEQELKKPMKQPPAQNGEMPNN) is domain II. The tract at residues 112–328 (MLNDKYTFDT…GALIRVVAYS (217 aa)) is domain III, AAA+ region. ATP is bound by residues glycine 156, glycine 158, lysine 159, and threonine 160. The segment at 329-449 (SLINQDMNAD…IQDISDKLRS (121 aa)) is domain IV, binds dsDNA.

It belongs to the DnaA family. As to quaternary structure, oligomerizes as a right-handed, spiral filament on DNA at oriC.

It is found in the cytoplasm. Functionally, plays an essential role in the initiation and regulation of chromosomal replication. ATP-DnaA binds to the origin of replication (oriC) to initiate formation of the DNA replication initiation complex once per cell cycle. Binds the DnaA box (a 9 base pair repeat at the origin) and separates the double-stranded (ds)DNA. Forms a right-handed helical filament on oriC DNA; dsDNA binds to the exterior of the filament while single-stranded (ss)DNA is stabiized in the filament's interior. The ATP-DnaA-oriC complex binds and stabilizes one strand of the AT-rich DNA unwinding element (DUE), permitting loading of DNA polymerase. After initiation quickly degrades to an ADP-DnaA complex that is not apt for DNA replication. Binds acidic phospholipids. This is Chromosomal replication initiator protein DnaA from Halalkalibacterium halodurans (strain ATCC BAA-125 / DSM 18197 / FERM 7344 / JCM 9153 / C-125) (Bacillus halodurans).